A 341-amino-acid polypeptide reads, in one-letter code: Syntaxin-122 (341 aa).

Methionine 1 carries the N-acetylmethionine modification. Disordered regions lie at residues 1-22 (MNDLLSGSFKTSVADGSSPPHS) and 111-137 (LDRANEVNRSLPESGPGSSSDRQRTSV). Residues 1–284 (MNDLLSGSFK…ARFYQKNTRK (284 aa)) are Cytoplasmic-facing. Polar residues-rich tracts occupy residues 8-21 (SFKTSVADGSSPPH) and 126-137 (PGSSSDRQRTSV). Residues 64 to 185 (CHNLRSSNEQ…GEYPDEATLE (122 aa)) adopt a coiled-coil conformation. One can recognise a t-SNARE coiled-coil homology domain in the interval 213-275 (INEIQERHDA…RSGADRLVKA (63 aa)). A helical; Anchor for type IV membrane protein transmembrane segment spans residues 285-305 (WTCFAILLLLIIVVLIVVFTV). Over 306 to 341 (KPWESNGGGGGGAPRQATPVQAQPPPPPAVNRRLLR) the chain is Vesicular. The disordered stretch occupies residues 312–341 (GGGGGGAPRQATPVQAQPPPPPAVNRRLLR).

It belongs to the syntaxin family. In terms of assembly, part of the t-SNARE complex.

The protein localises to the membrane. Functionally, vesicle trafficking protein that functions in the secretory pathway. This chain is Syntaxin-122 (SYP122), found in Arabidopsis thaliana (Mouse-ear cress).